We begin with the raw amino-acid sequence, 204 residues long: Small ribosomal subunit protein uS4 (204 aa).

The tract at residues 25–45 (AVPSRRAYPPGQHGQARKKRS) is disordered. Positions 92-152 (MRLDNIIFRL…NKENSRRLAE (61 aa)) constitute an S4 RNA-binding domain.

It belongs to the universal ribosomal protein uS4 family. In terms of assembly, part of the 30S ribosomal subunit. Contacts protein S5. The interaction surface between S4 and S5 is involved in control of translational fidelity.

Its function is as follows. One of the primary rRNA binding proteins, it binds directly to 16S rRNA where it nucleates assembly of the body of the 30S subunit. In terms of biological role, with S5 and S12 plays an important role in translational accuracy. The chain is Small ribosomal subunit protein uS4 from Cyanothece sp. (strain PCC 7425 / ATCC 29141).